The sequence spans 275 residues: MISNLAYIDPVAFQLGPIEVHWYGIIIAAGILLGYFIAQEGAKRAGLHKDALVDIIFWSAIFGFITARIYFVIFQWPYYAANPAEIPMIWHGGIAIHGGLIGGFITGVIICRRNNHNPLQVGDIIAPSIILAQGIGRWGNFMNHEAHGGPVAKSVLENMHIPEFIINNMYIDGRYYQPTFLYESIWDVLGFALLLFLRKHLRIGETFFTYLIWYSIGRFFVEGLRTDSLMLTSNIRVAQLVSILLILIGIAMIIYRRFKYQPPKYKDVKALPWPK.

Transmembrane regions (helical) follow at residues 18 to 38 (IEVHWYGIIIAAGILLGYFIA), 55 to 75 (IIFWSAIFGFITARIYFVIFQ), and 89 to 109 (IWHGGIAIHGGLIGGFITGVI). Arg137 lines the a 1,2-diacyl-sn-glycero-3-phospho-(1'-sn-glycerol) pocket. 2 helical membrane passes run 203-223 (IGETFFTYLIWYSIGRFFVEG) and 235-255 (IRVAQLVSILLILIGIAMIIY).

It belongs to the Lgt family.

Its subcellular location is the cell membrane. It catalyses the reaction L-cysteinyl-[prolipoprotein] + a 1,2-diacyl-sn-glycero-3-phospho-(1'-sn-glycerol) = an S-1,2-diacyl-sn-glyceryl-L-cysteinyl-[prolipoprotein] + sn-glycerol 1-phosphate + H(+). The protein operates within protein modification; lipoprotein biosynthesis (diacylglyceryl transfer). Functionally, catalyzes the transfer of the diacylglyceryl group from phosphatidylglycerol to the sulfhydryl group of the N-terminal cysteine of a prolipoprotein, the first step in the formation of mature lipoproteins. This Staphylococcus carnosus (strain TM300) protein is Phosphatidylglycerol--prolipoprotein diacylglyceryl transferase.